A 320-amino-acid chain; its full sequence is UDP-N-acetylenolpyruvoylglucosamine reductase (320 aa).

Residues 35 to 216 form the FAD-binding PCMH-type domain; it reads RAGGPAQVLF…KQAMDEVQHH (182 aa). Arg181 is a catalytic residue. Ser230 serves as the catalytic Proton donor. Glu300 is a catalytic residue.

It belongs to the MurB family. It depends on FAD as a cofactor.

It localises to the cytoplasm. The enzyme catalyses UDP-N-acetyl-alpha-D-muramate + NADP(+) = UDP-N-acetyl-3-O-(1-carboxyvinyl)-alpha-D-glucosamine + NADPH + H(+). It functions in the pathway cell wall biogenesis; peptidoglycan biosynthesis. In terms of biological role, cell wall formation. This Brucella anthropi (strain ATCC 49188 / DSM 6882 / CCUG 24695 / JCM 21032 / LMG 3331 / NBRC 15819 / NCTC 12168 / Alc 37) (Ochrobactrum anthropi) protein is UDP-N-acetylenolpyruvoylglucosamine reductase.